Consider the following 155-residue polypeptide: SsrA-binding protein (155 aa).

It belongs to the SmpB family.

Its subcellular location is the cytoplasm. In terms of biological role, required for rescue of stalled ribosomes mediated by trans-translation. Binds to transfer-messenger RNA (tmRNA), required for stable association of tmRNA with ribosomes. tmRNA and SmpB together mimic tRNA shape, replacing the anticodon stem-loop with SmpB. tmRNA is encoded by the ssrA gene; the 2 termini fold to resemble tRNA(Ala) and it encodes a 'tag peptide', a short internal open reading frame. During trans-translation Ala-aminoacylated tmRNA acts like a tRNA, entering the A-site of stalled ribosomes, displacing the stalled mRNA. The ribosome then switches to translate the ORF on the tmRNA; the nascent peptide is terminated with the 'tag peptide' encoded by the tmRNA and targeted for degradation. The ribosome is freed to recommence translation, which seems to be the essential function of trans-translation. This is SsrA-binding protein from Chelativorans sp. (strain BNC1).